A 763-amino-acid polypeptide reads, in one-letter code: Ribonucleoside-diphosphate reductase subunit alpha (763 aa).

Positions 5–95 (LFVTKRNGKK…IFHLRKKAYG (91 aa)) constitute an ATP-cone domain. ATP is bound by residues lysine 9, 15-21 (EKINLDK), threonine 55, and lysine 91. Threonine 209 contacts GDP. A disulfide bridge links cysteine 225 with cysteine 462. DTTP is bound by residues 232-234 (DNL), arginine 262, and arginine 269. Asparagine 437 is a binding site for GDP. Catalysis depends on asparagine 437, which acts as the Proton acceptor. The Cysteine radical intermediate role is filled by cysteine 439. GDP is bound by residues glutamate 441 and 623–625 (ETS). Glutamate 441 (proton acceptor) is an active-site residue.

It belongs to the ribonucleoside diphosphate reductase large chain family. Tetramer of two alpha and two beta subunits.

The enzyme catalyses a 2'-deoxyribonucleoside 5'-diphosphate + [thioredoxin]-disulfide + H2O = a ribonucleoside 5'-diphosphate + [thioredoxin]-dithiol. With respect to regulation, under complex allosteric control mediated by deoxynucleoside triphosphates and ATP binding to separate specificity and activation sites on the alpha subunit. The type of nucleotide bound at the specificity site determines substrate preference. It seems probable that ATP makes the enzyme reduce CDP and UDP, dGTP favors ADP reduction and dTTP favors GDP reduction. Stimulated by ATP and inhibited by dATP binding to the activity site. Functionally, provides the precursors necessary for DNA synthesis. Catalyzes the biosynthesis of deoxyribonucleotides from the corresponding ribonucleotides. The protein is Ribonucleoside-diphosphate reductase subunit alpha (nrdA) of Buchnera aphidicola subsp. Schizaphis graminum (strain Sg).